The sequence spans 320 residues: GPI-specific phospholipase A2-like PGAP3 (320 aa).

A signal peptide spans 1 to 23 (MAKRTAPLLLLTLAVGLAGGSQG). At 24–98 (DREPVYRDCV…QFHGKWPFSR (75 aa)) the chain is on the lumenal side. N40 carries an N-linked (GlcNAc...) asparagine glycan. Residues 99 to 119 (FLFIQEPASAVASLLNGLASL) form a helical membrane-spanning segment. Topologically, residues 120–135 (VMLCRYRASVPASSPM) are cytoplasmic. The helical transmembrane segment at 136–156 (YHTCMAFAWVSLNAWFWSTVF) threads the bilayer. Topologically, residues 157-169 (HTRDTDLTEKMDY) are lumenal. A helical transmembrane segment spans residues 170 to 190 (FCASAVILHSVYLCCVRTVGL). Topologically, residues 191-198 (QHPSVASA) are cytoplasmic. A helical membrane pass occupies residues 199–219 (FGALLLLLLTGHISYLSLVHF). The Lumenal segment spans residues 220-223 (DYGY). The helical transmembrane segment at 224 to 244 (NMMANVAIGLVNLAWWLVWCL) threads the bilayer. Residues 245–257 (RNRQRLPHTRRCM) lie on the Cytoplasmic side of the membrane. The chain crosses the membrane as a helical span at residues 258 to 278 (VVVVLLQGLSLLELLDFPPLF). A topological domain (lumenal) is located at residue W279. The chain crosses the membrane as a helical span at residues 280–299 (VLDAHAIWHISTIPVHTLFF). The Cytoplasmic portion of the chain corresponds to 300 to 320 (RFLEDDSLYLLKESGAMFKLD).

The protein belongs to the PGAP3 family.

The protein resides in the golgi apparatus membrane. Its function is as follows. Involved in the fatty acid remodeling steps of GPI-anchor maturation where the unsaturated acyl chain at sn-2 of inositol phosphate is replaced by a saturated stearoyl chain. May catalyze the first step of the fatty acid remodeling, by removing the unsaturated acyl chain at sn-2 of inositol phosphate, generating a lyso-GPI intermediate. The fatty acid remodeling steps is critical for the integration of GPI-APs into lipid rafts. The chain is GPI-specific phospholipase A2-like PGAP3 from Mus musculus (Mouse).